The primary structure comprises 229 residues: LexA repressor (229 aa).

A DNA-binding region (H-T-H motif) is located at residues 26 to 46 (FDEMKEALDLASKSGIHRLIT). Active-site for autocatalytic cleavage activity residues include Ser-149 and Lys-187.

The protein belongs to the peptidase S24 family. Homodimer.

The enzyme catalyses Hydrolysis of Ala-|-Gly bond in repressor LexA.. In terms of biological role, represses a number of genes involved in the response to DNA damage (SOS response), including recA and lexA. In the presence of single-stranded DNA, RecA interacts with LexA causing an autocatalytic cleavage which disrupts the DNA-binding part of LexA, leading to derepression of the SOS regulon and eventually DNA repair. In Phenylobacterium zucineum (strain HLK1), this protein is LexA repressor.